The sequence spans 299 residues: Protoheme IX farnesyltransferase (299 aa).

Transmembrane regions (helical) follow at residues 25 to 45 (IVSL…PDLA), 51 to 71 (LFGT…NHLI), 97 to 117 (ALAF…FLVN), 119 to 139 (LTAW…TAFL), 147 to 167 (IVLG…AVTG), 173 to 193 (AFLL…ALAL), 225 to 245 (FLLF…LLYL), and 275 to 295 (FGYS…DHYL).

It belongs to the UbiA prenyltransferase family. Protoheme IX farnesyltransferase subfamily.

It is found in the cell inner membrane. It carries out the reaction heme b + (2E,6E)-farnesyl diphosphate + H2O = Fe(II)-heme o + diphosphate. It participates in porphyrin-containing compound metabolism; heme O biosynthesis; heme O from protoheme: step 1/1. Functionally, converts heme B (protoheme IX) to heme O by substitution of the vinyl group on carbon 2 of heme B porphyrin ring with a hydroxyethyl farnesyl side group. The protein is Protoheme IX farnesyltransferase of Nitrosococcus oceani (strain ATCC 19707 / BCRC 17464 / JCM 30415 / NCIMB 11848 / C-107).